Consider the following 85-residue polypeptide: Conotoxin Mi15b (85 aa).

Positions 1–23 (MEKLTVLILVAIVLLTIQVLGQS) are cleaved as a signal peptide. Positions 24–49 (DRDKHPKRRPRQYATKRLSALMKGHR) are excised as a propeptide. Q50 carries the pyrrolidone carboxylic acid modification.

It belongs to the conotoxin O2 superfamily. Post-translationally, contains 4 disulfide bonds. In terms of tissue distribution, expressed by the venom duct.

Its subcellular location is the secreted. The protein is Conotoxin Mi15b of Conus miles (Soldier cone).